Reading from the N-terminus, the 311-residue chain is Probable manganese-dependent inorganic pyrophosphatase (311 aa).

Mn(2+) contacts are provided by H9, D13, D15, D77, H99, and D151.

Belongs to the PPase class C family. It depends on Mn(2+) as a cofactor.

The protein localises to the cytoplasm. It catalyses the reaction diphosphate + H2O = 2 phosphate + H(+). This is Probable manganese-dependent inorganic pyrophosphatase from Streptococcus pyogenes serotype M1.